The chain runs to 573 residues: BICD family-like cargo adapter 1 (573 aa).

Positions 67 to 97 (ERPSDPGEHPQAEPGSLAEGAGPQPPPSQDP) are disordered. Residues 68–77 (RPSDPGEHPQ) are compositionally biased toward basic and acidic residues. The short motif at 113 to 117 (AARLG) is the CC1 box element. Residues 118–376 (KALLERNQDM…QLWEAYCQVR (259 aa)) adopt a coiled-coil conformation. Positions 386–412 (DSADSAVSTDSSMDESSETSSAKDVPA) are disordered. Over residues 387–396 (SADSAVSTDS) the composition is skewed to low complexity. A coiled-coil region spans residues 440–525 (LSVEMTALKE…LEAWQDDMHR (86 aa)).

The protein belongs to the BICDR family. As to quaternary structure, part of a tripartite complex with dynein and dynactin, acts an adapter linking the dynein motor complex and dynactin. Interacts with KIF1C. Interacts with RAB6A and RAB6B; interaction is specific to Rab6.

The protein localises to the cytoplasm. Its subcellular location is the cytoskeleton. It is found in the microtubule organizing center. It localises to the centrosome. Acts as an adapter protein linking the dynein motor complex to various cargos and converts dynein from a non-processive to a highly processive motor in the presence of dynactin. Facilitates the interaction between dynein and dynactin and activates dynein processivity (the ability to move along a microtubule for a long distance without falling off the track). Predominantly recruits 2 dyneins, which increases both the force and speed of the microtubule motor. Component of secretory vesicle machinery in developing neurons that acts as a regulator of neurite outgrowth. Regulates the secretory vesicle transport by controlling the accumulation of Rab6-containing secretory vesicles in the pericentrosomal region restricting anterograde secretory transport during the early phase of neuronal differentiation, thereby inhibiting neuritogenesis. The sequence is that of BICD family-like cargo adapter 1 (BICDL1) from Homo sapiens (Human).